Consider the following 1342-residue polypeptide: DNA-directed RNA polymerase subunit beta (1342 aa).

The protein belongs to the RNA polymerase beta chain family. In terms of assembly, the RNAP catalytic core consists of 2 alpha, 1 beta, 1 beta' and 1 omega subunit. When a sigma factor is associated with the core the holoenzyme is formed, which can initiate transcription.

The enzyme catalyses RNA(n) + a ribonucleoside 5'-triphosphate = RNA(n+1) + diphosphate. Its function is as follows. DNA-dependent RNA polymerase catalyzes the transcription of DNA into RNA using the four ribonucleoside triphosphates as substrates. The chain is DNA-directed RNA polymerase subunit beta from Pasteurella multocida (strain Pm70).